The primary structure comprises 429 residues: Serine--tRNA ligase (429 aa).

234-236 (TSE) contacts L-serine. ATP is bound by residues 265–267 (RKE) and V281. Residue E288 participates in L-serine binding. Position 352–355 (352–355 (ELVS)) interacts with ATP. Position 389 (T389) interacts with L-serine.

It belongs to the class-II aminoacyl-tRNA synthetase family. Type-1 seryl-tRNA synthetase subfamily. Homodimer. The tRNA molecule probably binds across the dimer.

It carries out the reaction tRNA(Ser) + L-serine + ATP = L-seryl-tRNA(Ser) + AMP + diphosphate + H(+). The catalysed reaction is tRNA(Sec) + L-serine + ATP = L-seryl-tRNA(Sec) + AMP + diphosphate + H(+). The protein operates within aminoacyl-tRNA biosynthesis; selenocysteinyl-tRNA(Sec) biosynthesis; L-seryl-tRNA(Sec) from L-serine and tRNA(Sec): step 1/1. In terms of biological role, catalyzes the attachment of serine to tRNA(Ser). Is also probably able to aminoacylate tRNA(Sec) with serine, to form the misacylated tRNA L-seryl-tRNA(Sec), which will be further converted into selenocysteinyl-tRNA(Sec). The chain is Serine--tRNA ligase from Encephalitozoon cuniculi (strain GB-M1) (Microsporidian parasite).